Consider the following 431-residue polypeptide: Glutamate-1-semialdehyde 2,1-aminomutase (431 aa).

Residue K270 is modified to N6-(pyridoxal phosphate)lysine.

This sequence belongs to the class-III pyridoxal-phosphate-dependent aminotransferase family. HemL subfamily. Homodimer. Pyridoxal 5'-phosphate is required as a cofactor.

The protein resides in the cytoplasm. The catalysed reaction is (S)-4-amino-5-oxopentanoate = 5-aminolevulinate. Its pathway is porphyrin-containing compound metabolism; protoporphyrin-IX biosynthesis; 5-aminolevulinate from L-glutamyl-tRNA(Glu): step 2/2. The chain is Glutamate-1-semialdehyde 2,1-aminomutase from Limosilactobacillus reuteri subsp. reuteri (strain JCM 1112) (Lactobacillus reuteri).